Here is a 229-residue protein sequence, read N- to C-terminus: Adenylate kinase (229 aa).

Position 10–15 (10–15 (GSGKGT)) interacts with ATP. The tract at residues 30-59 (ESGVIFREHISKGTELGKQAKSYIDKGELV) is NMP. AMP contacts are provided by residues Ser-31, Arg-36, 57–59 (ELV), 84–87 (GFPR), and Gln-91. Positions 125-164 (GRRICKTNNNHPNNVSIDSIKPDGNNCRVCHGELIVRTDD) are LID. Arg-126 contacts ATP. 2 residues coordinate AMP: Arg-161 and Arg-173. Asn-209 is a binding site for ATP.

Belongs to the adenylate kinase family. Monomer.

The protein localises to the cytoplasm. It catalyses the reaction AMP + ATP = 2 ADP. Its pathway is purine metabolism; AMP biosynthesis via salvage pathway; AMP from ADP: step 1/1. Functionally, catalyzes the reversible transfer of the terminal phosphate group between ATP and AMP. Plays an important role in cellular energy homeostasis and in adenine nucleotide metabolism. This Lawsonia intracellularis (strain PHE/MN1-00) protein is Adenylate kinase.